The following is a 148-amino-acid chain: SsrA-binding protein (148 aa).

This sequence belongs to the SmpB family.

It localises to the cytoplasm. Functionally, required for rescue of stalled ribosomes mediated by trans-translation. Binds to transfer-messenger RNA (tmRNA), required for stable association of tmRNA with ribosomes. tmRNA and SmpB together mimic tRNA shape, replacing the anticodon stem-loop with SmpB. tmRNA is encoded by the ssrA gene; the 2 termini fold to resemble tRNA(Ala) and it encodes a 'tag peptide', a short internal open reading frame. During trans-translation Ala-aminoacylated tmRNA acts like a tRNA, entering the A-site of stalled ribosomes, displacing the stalled mRNA. The ribosome then switches to translate the ORF on the tmRNA; the nascent peptide is terminated with the 'tag peptide' encoded by the tmRNA and targeted for degradation. The ribosome is freed to recommence translation, which seems to be the essential function of trans-translation. This is SsrA-binding protein from Ehrlichia ruminantium (strain Welgevonden).